Reading from the N-terminus, the 535-residue chain is Cytochrome P450 monooxygenase atE (535 aa).

Residue Cys455 coordinates heme.

Belongs to the cytochrome P450 family. Heme serves as cofactor.

It catalyses the reaction 3-methylcatechol + AH2 + O2 = 3-methylbenzene-1,2,4-triol + A + H2O. It participates in secondary metabolite biosynthesis. Its function is as follows. Cytochrome P450 monooxygenase; part of the gene cluster that mediates the biosynthesis of terreic acid, a quinone epoxide inhibitor of Bruton's tyrosine kinase. The first step of the pathway is the synthesis of 6-methylsalicylic acid (6-MSA) by the 6-methylsalicylic acid synthase atX. In the biosynthesis of 6-MSA, atX utilizes one acetyl-CoA and three malonyl-CoAs as its substrates and catalyzes a series of programmed reactions including Claisen condensation, reduction, aldol cyclization, and the hydrolytic cleavage that yields 6-MSA. The 6-methylsalicylate 1-monooxygenase atA then catalyzes the decarboxylative hydroxylation of 6-MSA to 3-methylcatechol. The next step is the conversion of 3-methylcatechol to 3-methyl-1,2,4-benzenetriol by cytochrome P450 monooxygenase atE, which is enhanced by cytochrome P450 monooxygenase atG. Then, the epoxidase atD catalyzes the epoxidation and hydroxyl oxidation of 3-methyl-1,2,4-benzenetriol to terremutin. Lastly, GMC oxidoreductase atC oxidizes terremutin to terreic acid. The chain is Cytochrome P450 monooxygenase atE from Aspergillus terreus (strain NIH 2624 / FGSC A1156).